Reading from the N-terminus, the 1682-residue chain is Calmodulin-binding transcription activator 1 (1682 aa).

The CG-1 DNA-binding region spans 63–188 (KCSSLPKERH…YLNVPAIEDC (126 aa)). A Nuclear localization signal motif is present at residues 112-119 (RKKVKYRK). Disordered stretches follow at residues 284 to 375 (RIIS…MVDS) and 599 to 622 (SSFS…FLQD). Residues 302–327 (EVQHNDVSEGKHEPSHGRSTSREKRN) show a composition bias toward basic and acidic residues. 2 stretches are compositionally biased toward polar residues: residues 337-367 (HQNS…SGLN) and 599-618 (SSFS…SPSF). The 79-residue stretch at 877–955 (DYSPEWSYPE…ISNSVVFEYK (79 aa)) folds into the IPT/TIG domain. The tract at residues 992 to 1020 (MAEMTGSQQHKQASGGGGSGSGSGSGAGG) is disordered. Residues 1005–1020 (SGGGGSGSGSGSGAGG) show a composition bias toward gly residues. ANK repeat units lie at residues 1066 to 1095 (RGMT…KHAD), 1111 to 1141 (FSCT…AISI), and 1145 to 1174 (LGRL…DEQA). Disordered regions lie at residues 1217 to 1249 (ASTN…KKHK) and 1267 to 1318 (LSLE…SASQ). Over residues 1268–1291 (SLEQPNIRKQSPRSKQPSPETISP) the composition is skewed to polar residues. Low complexity predominate over residues 1308–1318 (ETAASQASASQ). IQ domains lie at 1549-1585 (QEVA…AAIL), 1586-1608 (IQSK…AAVL), and 1609-1631 (IQNF…TAVI).

It belongs to the CAMTA family. As to quaternary structure, may interact with calmodulin.

It is found in the nucleus. Its subcellular location is the cytoplasm. Transcriptional activator. The sequence is that of Calmodulin-binding transcription activator 1 from Mus musculus (Mouse).